We begin with the raw amino-acid sequence, 633 residues long: Terminal nucleotidyltransferase 4B (633 aa).

Residues 1–115 (MFRSGERPLG…GGGRADGGGG (115 aa)) form a disordered region. The span at 25 to 34 (ETTNNNNNHH) shows a compositional bias: polar residues. Composition is skewed to low complexity over residues 36–52 (PAAW…ASPV) and 60–70 (RPAAALPASES). A compositionally biased stretch (polar residues) spans 87–98 (ASTYGLNYSLLQ). Positions 103–115 (RAAGGGRADGGGG) are enriched in gly residues. Residues Asp191 and Asp193 each contribute to the Mg(2+) site. Positions 254, 279, 297, 298, 382, and 386 each coordinate ATP. A PAP-associated domain is found at 322–382 (NYGVLLIEFF…YIEDPLQPGN (61 aa)). The interval 484–633 (LGKCRSNASE…RDAPLSELCR (150 aa)) is disordered. Positions 492–519 (SEPLSKHSSNSSSGPVSSSSATQSSSSD) are enriched in low complexity. Residue Lys531 forms a Glycyl lysine isopeptide (Lys-Gly) (interchain with G-Cter in SUMO2) linkage. A compositionally biased stretch (polar residues) spans 542 to 552 (RVGSQDVSLEV). Ser545 carries the post-translational modification Phosphoserine. Glycyl lysine isopeptide (Lys-Gly) (interchain with G-Cter in SUMO2) cross-links involve residues Lys558, Lys573, and Lys587. Residues 559–614 (MQSTQTTNTPNNANKSQHGSARLFRSSSKGFQGTAQTSHGALMTSKQHQGKSNTQY) show a composition bias toward polar residues. A Basic, involved in binding of the RNA primer motif is present at residues 618 to 624 (KKRRHKR).

Belongs to the DNA polymerase type-B-like family. Component of a nucleolar TRAMP-like complex, an ATP-dependent exosome regulatory complex consisting of a helicase (MTREX), an oligadenylate polymerase (TENT4B or TENT4A), and a substrate specific RNA-binding factor (ZCCHC7 or ZCCHC8). Several TRAMP-like complexes exist with specific compositions and are associated with nuclear, or nucleolar RNA exosomes. Mg(2+) is required as a cofactor. Requires Mn(2+) as cofactor.

The protein localises to the nucleus. It is found in the nucleolus. It localises to the cytoplasm. The catalysed reaction is RNA(n) + ATP = RNA(n)-3'-adenine ribonucleotide + diphosphate. Its function is as follows. Terminal nucleotidyltransferase that catalyzes preferentially the transfer of ATP and GTP on RNA 3' poly(A) tail creating a heterogeneous 3' poly(A) tail leading to mRNAs stabilization by protecting mRNAs from active deadenylation. Also functions as a catalytic subunit of a TRAMP-like complex which has a poly(A) RNA polymerase activity and is involved in a post-transcriptional quality control mechanism. Polyadenylation with short oligo(A) tails is required for the degradative activity of the exosome on several of its nuclear RNA substrates. Doesn't need a cofactor for polyadenylation activity (in vitro). Plays a role in replication-dependent histone mRNA degradation, probably through terminal uridylation of mature histone mRNAs. May play a role in sister chromatid cohesion. This Mus musculus (Mouse) protein is Terminal nucleotidyltransferase 4B.